Consider the following 229-residue polypeptide: Auxin-responsive protein IAA17 (229 aa).

The short motif at 14 to 18 (LCLGL) is the EAR-like (transcriptional repression) element. Residues 110–211 (AAFVKVSMDG…TCKRLRLMKG (102 aa)) form the PB1 domain.

This sequence belongs to the Aux/IAA family. Homodimers and heterodimers. Interacts with the auxin response factors ARF1 and IAA24. Interacts with IAA1. Interacts with TPL. Interacts (via PB1 domain) with ARF7 (via PB1 domain). In terms of processing, phosphorylated by phytochrome A in vitro.

It is found in the nucleus. Aux/IAA proteins are short-lived transcriptional factors that function as repressors of early auxin response genes at low auxin concentrations. Repression is thought to result from the interaction with auxin response factors (ARFs), proteins that bind to the auxin-responsive promoter element (AuxRE). Formation of heterodimers with ARF proteins may alter their ability to modulate early auxin response genes expression. The protein is Auxin-responsive protein IAA17 (IAA17) of Arabidopsis thaliana (Mouse-ear cress).